The following is a 330-amino-acid chain: Basic leucine zipper 2 (330 aa).

A disordered region spans residues 1–207 (MAQLPPKIPT…NRQSAQRSRV (207 aa)). The span at 21–34 (GHHHHAAHGHHHQR) shows a compositional bias: basic residues. Pro residues predominate over residues 45-56 (PLPPFPLPPPAP). Low complexity-rich tracts occupy residues 57-72 (ANGG…QHQP) and 139-151 (QPAA…SSPS). Over residues 155–166 (SMNDEKQDKGET) the composition is skewed to basic and acidic residues. Positions 188–244 (DPKRVKRILANRQSAQRSRVRKLQYISELERSVTSLQTEVSALSPRVAFLDHQRSLL) constitute a bZIP domain. The tract at residues 190–209 (KRVKRILANRQSAQRSRVRK) is basic motif. The interval 216 to 244 (LERSVTSLQTEVSALSPRVAFLDHQRSLL) is leucine-zipper. The interval 267-330 (GGTEEGDREA…LVIGRDPDAL (64 aa)) is disordered.

As to expression, expressed in roots, shoots and panicles.

The protein resides in the nucleus. Transcription regulator. The chain is Basic leucine zipper 2 (BZIP02) from Oryza sativa subsp. japonica (Rice).